Consider the following 457-residue polypeptide: Multidrug resistance protein MdtK (457 aa).

At 1-10 (MQKYISEARL) the chain is on the cytoplasmic side. A helical membrane pass occupies residues 11 to 31 (LLALAIPVILAQIAQTAMGFV). At 32–52 (DTVMAGGYSATDMAAVAIGTS) the chain is on the periplasmic side. A helical transmembrane segment spans residues 53-73 (IWLPAILFGHGLLLALTPVIA). The Cytoplasmic portion of the chain corresponds to 74 to 92 (QLNGSGRRERIAHQVRQGF). The chain crosses the membrane as a helical span at residues 93 to 113 (WLAGFVSVLIMLVLWNAGYII). Residues 114-126 (RSMENIDPALADK) lie on the Periplasmic side of the membrane. A helical transmembrane segment spans residues 127-147 (AVGYLRALLWGAPGYLFFQVA). Residues 148 to 159 (RNQCEGLAKTKP) are Cytoplasmic-facing. Residues 160–180 (GMVMGFIGLLVNIPVNYIFIY) form a helical membrane-spanning segment. Topologically, residues 181-188 (GHFGMPEL) are periplasmic. The helical transmembrane segment at 189–209 (GGVGCGVATAAVYWVMFLAMV) threads the bilayer. Residues 210 to 242 (SYIKRARSMRDIRNEKGTAKPDPAVMKRLIQLG) are Cytoplasmic-facing. The helical transmembrane segment at 243–263 (LPIALALFFEVTLFAVVALLV) threads the bilayer. The Periplasmic segment spans residues 264-275 (SPLGIVDVAGHQ). A helical transmembrane segment spans residues 276–296 (IALNFSSLMFVLPMSLAAAVT). Residues 297-313 (IRVGYRLGQGSTLDAQT) lie on the Cytoplasmic side of the membrane. The chain crosses the membrane as a helical span at residues 314–334 (AARTGLMVGVCMATLTAIFTV). The Periplasmic segment spans residues 335–349 (SLREQIALLYNDNPE). A helical membrane pass occupies residues 350–370 (VVTLAAHLMLLAAVYQISDSI). The Cytoplasmic portion of the chain corresponds to 371-386 (QVIGSGILRGYKDTRS). A helical membrane pass occupies residues 387–407 (IFYITFTAYWVLGLPSGYILA). The Periplasmic portion of the chain corresponds to 408–417 (LTDLVVEPMG). Residues 418–438 (PAGFWIGFIIGLTSAAIMMML) traverse the membrane as a helical segment. Residues 439-457 (RMRFLQRMPSAIILQRASR) lie on the Cytoplasmic side of the membrane.

The protein belongs to the multi antimicrobial extrusion (MATE) (TC 2.A.66.1) family. MdtK subfamily.

Its subcellular location is the cell inner membrane. Its function is as follows. Multidrug efflux pump that functions probably as a Na(+)/drug antiporter. The sequence is that of Multidrug resistance protein MdtK from Shigella boydii serotype 4 (strain Sb227).